A 42-amino-acid polypeptide reads, in one-letter code: uncharacterized protein (42 aa).

This is an uncharacterized protein from Pasteurella multocida (strain Pm70).